The chain runs to 867 residues: uncharacterized protein (867 aa).

An SPX domain is found at 1–294; the sequence is MKFSHSLQFN…GSSLRESYMK (294 aa). 2 disordered regions span residues 105–152 and 165–228; these read QGNN…GQTS and ESTA…NNNR. The segment covering 138 to 152 has biased composition (polar residues); sequence ITSSNREIYLNGQTS. A compositionally biased stretch (acidic residues) spans 198–223; that stretch reads GNDDEVEEEDDDDDDEDEDEDEDEDN. 12 helical membrane-spanning segments follow: residues 406-426, 434-454, 485-505, 537-557, 576-596, 616-636, 656-676, 683-703, 712-732, 755-775, 797-817, and 842-862; these read TIAT…FPVI, CLAL…PLFV, VIFS…FTIA, MFVA…VLCF, ILIV…PISS, FAVS…LLSF, FTGV…LWCL, VFGD…GTGL, FLWT…VVSS, VLLI…HIVA, LFVL…TSGF, and AGIP…TPIM.

It belongs to the CitM (TC 2.A.11) transporter family.

It is found in the endoplasmic reticulum membrane. This is an uncharacterized protein from Schizosaccharomyces pombe (strain 972 / ATCC 24843) (Fission yeast).